The sequence spans 172 residues: MSIRFARKADCAAIAEIYNHAVLYTAAIWNDQTVDADNRIAWFEARTLAGYPVLVSEENGVVTGYASFGDWRSFDGFRHTVEHSVYVHPDHQGKGLGRKLLSRLIDEARDCGKHVMVAGIESQNQASLHLHQSLGFVVTAQMPQVGTKFGRWLDLTFMQLQLDERTEPDAIG.

Residues 1–163 (MSIRFARKAD…DLTFMQLQLD (163 aa)) form the N-acetyltransferase domain. Acetyl-CoA is bound by residues 85–87 (VYV), 93–98 (GKGLGR), Asn124, and Ser133.

Belongs to the acetyltransferase family. PAT/BAR subfamily.

It carries out the reaction L-methionine + acetyl-CoA = N-acetyl-L-methionine + CoA + H(+). The enzyme catalyses propanoyl-CoA + L-methionine = N-propanoyl-L-methioninate + CoA + H(+). The catalysed reaction is L-alpha-phenylglycine + acetyl-CoA = N-acetyl-L-alpha-phenylglycine + CoA + H(+). It catalyses the reaction L-methionine sulfoximine + acetyl-CoA = N-acetyl-L-methionine sulfoximine + CoA + H(+). It carries out the reaction L-methionine sulfone + acetyl-CoA = N-acetyl-L-methionine sulfone + CoA + H(+). Acyltransferase that appears to be required for E.coli optimal growth rate and yield via the formation of N-acetylated amino acids. Catalyzes the acylation of L-methionine using acetyl-CoA or propanoyl-CoA as acyl donors, and the acetylation of L-phenylglycine. Is also able to N-acylate other free L-amino acids and their derivatives using a CoA thioester as cosubstrate. Using acetyl-CoA as an acyl donor, substrate specificity is methionine sulfone &gt; methionine sulfoximine &gt; methionine sulfoxide &gt; methionine. Asparagine, lysine, glutamine, aspartate and glutamate are very poor substrates. Using methionine as a substrate, acyl donor preference is propanoyl-CoA &gt; acetyl-CoA &gt;&gt; butyryl-CoA. Likely plays a role in the resistance against the toxic effects of L-methionine sulfoximine (MSX), via its ability to catalyze its acetylation; MSX is a rare amino acid which inhibits glutamine synthetase (GlnA). The chain is L-amino acid N-acyltransferase MnaT from Escherichia coli (strain K12).